The chain runs to 368 residues: DNA-directed RNA polymerase subunit alpha (368 aa).

The tract at residues 1 to 231 (MLWKGFQKPK…DHMNIFINFE (231 aa)) is alpha N-terminal domain (alpha-NTD). The alpha C-terminal domain (alpha-CTD) stretch occupies residues 243-368 (KPEIRNENLN…GFGGDNNPGF (126 aa)).

The protein belongs to the RNA polymerase alpha chain family. In terms of assembly, homodimer. The RNAP catalytic core consists of 2 alpha, 1 beta, 1 beta' and 1 omega subunit. When a sigma factor is associated with the core the holoenzyme is formed, which can initiate transcription.

The enzyme catalyses RNA(n) + a ribonucleoside 5'-triphosphate = RNA(n+1) + diphosphate. Functionally, DNA-dependent RNA polymerase catalyzes the transcription of DNA into RNA using the four ribonucleoside triphosphates as substrates. The polypeptide is DNA-directed RNA polymerase subunit alpha (Koribacter versatilis (strain Ellin345)).